Reading from the N-terminus, the 497-residue chain is Ganglioside-induced differentiation-associated protein 2 (497 aa).

A Macro domain is found at Arg-43–Phe-223. Residues Glu-252–Glu-273 are disordered. The segment covering Arg-253–Ala-263 has biased composition (basic and acidic residues). Phosphoserine is present on Ser-280. The region spanning Asp-333–Ala-481 is the CRAL-TRIO domain.

This sequence belongs to the GDAP2 family.

In Homo sapiens (Human), this protein is Ganglioside-induced differentiation-associated protein 2 (GDAP2).